Reading from the N-terminus, the 101-residue chain is Urease subunit beta (101 aa).

This sequence belongs to the urease beta subunit family. In terms of assembly, heterotrimer of UreA (gamma), UreB (beta) and UreC (alpha) subunits. Three heterotrimers associate to form the active enzyme.

The protein localises to the cytoplasm. It catalyses the reaction urea + 2 H2O + H(+) = hydrogencarbonate + 2 NH4(+). The protein operates within nitrogen metabolism; urea degradation; CO(2) and NH(3) from urea (urease route): step 1/1. The chain is Urease subunit beta from Albidiferax ferrireducens (strain ATCC BAA-621 / DSM 15236 / T118) (Rhodoferax ferrireducens).